Reading from the N-terminus, the 695-residue chain is Frizzled and smoothened-like protein O (695 aa).

A signal peptide spans 1–23; sequence MKKLNYLLIVSFIFILNLLISKS. At 24-233 the chain is on the extracellular side; sequence QVLIDVTAKC…KEYKTKFYSE (210 aa). In terms of domain architecture, FZ spans 28 to 173; it reads DVTAKCELID…ANEEIQCSGP (146 aa). Cystine bridges form between C33–C96, C42–C89, C80–C125, C114–C170, and C118–C138. The N-linked (GlcNAc...) asparagine glycan is linked to N47. N137 and N178 each carry an N-linked (GlcNAc...) asparagine glycan. The chain crosses the membrane as a helical span at residues 234–254; the sequence is AILFSFSTACSFYLIFTFGVF. The Cytoplasmic segment spans residues 255-262; that stretch reads PNKYTNRN. A helical membrane pass occupies residues 263-283; sequence WIIVYLGITAICLAISYAVQE. The Extracellular portion of the chain corresponds to 284 to 307; sequence ARYGGGDWRCTSDPGRYKSSEDGT. A helical membrane pass occupies residues 308 to 328; that stretch reads CILGGFFFQIGGLGTILFLSL. At 329–343 the chain is on the cytoplasmic side; it reads YSFDMFLTMNMMTNK. Residues 344–364 traverse the membrane as a helical segment; it reads YFIQTSVGMWALIIFYALLPI. The Extracellular segment spans residues 365–387; the sequence is KHYESSIASAGCWLSNEDNMFWQ. A helical transmembrane segment spans residues 388–408; it reads YFCFYVPSYVATFFLGVFIIT. Topologically, residues 409-435 are cytoplasmic; the sequence is SIYKVFKMTVMFKSIKDKRILLLNIRS. Residues 436 to 456 form a helical membrane-spanning segment; that stretch reads IIFLIAIMFCVSFSTMYPLYV. Residues 457 to 500 lie on the Extracellular side of the membrane; the sequence is TYNGDDFSKSVEVYVTCLYANIPNGNEVCPQIVFPQFSLRYMNA. A helical transmembrane segment spans residues 501 to 521; it reads ITMAIIGIVGLIGLGIDPHIL. Residues 522-695 are Cytoplasmic-facing; that stretch reads QIYRESIRFK…NIERINSDNV (174 aa). A compositionally biased stretch (polar residues) spans 545-556; that stretch reads SPQPLKQGSTTD. Residues 545 to 695 form a disordered region; it reads SPQPLKQGST…NIERINSDNV (151 aa). Positions 593–608 are enriched in low complexity; the sequence is NLSASSESSNNLLNQS. The segment covering 609–625 has biased composition (polar residues); that stretch reads TPGNLNINESISSIDTS. Residues 626–686 are compositionally biased toward low complexity; it reads NNNNNNNNNN…NNNNNNNNNN (61 aa). Residues 653–691 are a coiled coil; it reads NNNNNNNNNNNNNNNNNNNNYSNNNNNNNNNNNNIERIN.

The protein belongs to the G-protein coupled receptor Fz/Smo family.

The protein resides in the membrane. The sequence is that of Frizzled and smoothened-like protein O (fslO) from Dictyostelium discoideum (Social amoeba).